Consider the following 4265-residue polypeptide: Dynein axonemal heavy chain 1 (4265 aa).

The tract at residues 1–88 (MEQPNSKGYS…KSPLTGTDKK (88 aa)) is disordered. Positions 1–1542 (MEQPNSKGYS…YIRAVNAEFI (1542 aa)) are stem. Positions 60 to 69 (PHLPLPPAPP) are enriched in pro residues. AAA stretches follow at residues 1543–1764 (YGYE…VISA), 1824–2057 (EAIR…SSVK), 2189–2449 (TMVP…VFQG), and 2547–2799 (DYNQ…LTRH). Positions 1581 to 1588 (GPAGTGKT) match the GPAGTGKT motif motif. 1581 to 1588 (GPAGTGKT) provides a ligand contact to ATP. Positions 1631 to 1637 (CFDEFNR) match the CFDEFNR motif motif. Residues 1862-1869 (GPTGSGKS), 2227-2234 (GPTGTGKT), and 2586-2593 (GVGGSGRS) each bind ATP. Residues 2814–3112 (FSILIGQKKL…EELELKCEQC (299 aa)) form a stalk region. A coiled-coil region spans residues 3074–3122 (LDEAKQRLREVEDGIATMQAKYRECITKKEELELKCEQCEQRLGRAGKL). AAA stretches follow at residues 3197-3427 (LGNP…EIQA) and 3640-3859 (MQDF…QLKM).

This sequence belongs to the dynein heavy chain family. Consists of at least two heavy chains and a number of intermediate and light chains. As to expression, expressed primarily in trachea and testis, 2 tissues containing axonemal structures. Also expressed in brain.

The protein resides in the cytoplasm. Its subcellular location is the cytoskeleton. The protein localises to the cilium axoneme. It is found in the cell projection. It localises to the cilium. The protein resides in the flagellum. Functionally, force generating protein of cilia required for sperm flagellum motility. Produces force towards the minus ends of microtubules. Dynein has ATPase activity; the force-producing power stroke is thought to occur on release of ADP. Required in spermatozoa for the formation of the inner dynein arms and biogenesis of the axoneme. This is Dynein axonemal heavy chain 1 from Homo sapiens (Human).